Here is a 1349-residue protein sequence, read N- to C-terminus: MQKEEDVCPEAGYCLGTALSSWGLHFMEEHSQSTMLMGIGIGVLLTLAFVGLAAFFVYRKVSRFRRAEPIPQYRFRKRDKVMFYGRKIMRKVTTLPHTLVGNTAAPRQRVRKRTKVLSLAKRILRFKKEYPTLQPKEPPPSLLEADLTEFDVKNSHLPSEVLYMLKNVRVLGHFEKPLFLELCKHMVFVQLQEGEHVFQPGEPDISIYVVQDGRLEVCIQDADGTEVVVKEVLPGDSVHSLLSILDVITGHTAPYKTVSARAAVASTVLWLPAAAFQGVFEKYPETLVRVVQIIMVRLQRVTFLALHNYLGLTTELFNPESQAIPLLSVASVAGRAKRQMSYGPEEQLERSPRLSEFNSSDQRSVAVSGPLLKRSCSVPLPPIHGEIDELRQAQGSGSNTSAFQESQEGATSDLGMAYNRARILPHSEEQLGSSLASKSKKSVVAETSAVFHYSEKPRDEPGPSGRTDAIFRAATKDLLTLMKLDDPSLLDGRVAFLHVPAGTIVSKQGDQDVNILFVVSGMLHVYQQKIDSLEDTCLFLTHPGEMVGQLAVLTGEPLMFTIRANRDCSFLSISKAHFYEIMRKRPDVVLGVAHTVVRRMSSFVRQIDFALDWMEVEAGRAIYRQGDKSDCTYIVLSGRLRSVIRKDDGKKRLAGEYGRGDLVGVVEMLTHQARATTVHAVRDSELAKLPAGALTSIKRRYPQVVTRLIHLLGEKILGSLQQGSGTGHQLGFNTASSKWDLGNPPGNLSTVAAMPVSEDVPLTAFALELQHALSAIGPVLLLTSDNIKQRLGSAALDSIHEYRLSSWLGQQEDIHRIVLYQADSTLTPWTQRCIRQADCILIVGLGDQEPALGELEQMLESTAVRAQKQLILLHKEEGPAPSRTVEWLNMRSWCSGHLHLCCPRRVFSKRSLPKLVEMYTRIFQRPPDRHSDFSRLARILTGNAIALVLGGGGARGCAQVGILRALAECGIPVDIIGGTSIGAFMGALFAEERSYSQIRIRAKQWAEDMTSMVKTILDLTYPITSMFSGTGFNSSISNIFKDRQIEDLWLPYFAITTDITASAMRVHTDGALWRYVRASMSLSGYMPPLCDPKDGHLLMDGGYINNLPADVARSMGAKVVIAIDVGSRDETDLTNYGDALSGWWLLWKRWNPLATKVKVLNMAEIQTRLAYVCCVRQLEMVKNSDYCEYLRPPIDSYRTLDFGKFDEICEVGYQHGPAGFDIWVRSGVLEKMLQDQQGTSKRMDCGVFTCPNSSFTDLAEIVSRIEPAKVAAVDDESDYQTEYEEELPAIPKETYADFQSTGIELDSDSECEPSMSQGPHSLTSPKQSQDSFPWLPNQDDQGPRLYRPS.

Residues 1 to 36 lie on the Lumenal side of the membrane; it reads MQKEEDVCPEAGYCLGTALSSWGLHFMEEHSQSTML. A helical transmembrane segment spans residues 37–57; sequence MGIGIGVLLTLAFVGLAAFFV. Residues 58–1349 lie on the Cytoplasmic side of the membrane; it reads YRKVSRFRRA…DQGPRLYRPS (1292 aa). 170–297 is an a nucleoside 3',5'-cyclic phosphate binding site; it reads VLGHFEKPLF…VRVVQIIMVR (128 aa). The interval 340–361 is disordered; the sequence is MSYGPEEQLERSPRLSEFNSSD. 2 positions are modified to phosphoserine: S341 and S377. Residues 496-599 and 610-715 each bind a nucleoside 3',5'-cyclic phosphate; these read FLHV…VVRR and ALDW…LGEK. The interval 678–964 is involved in the binding to lipid droplets; the sequence is VHAVRDSELA…RGCAQVGILR (287 aa). One can recognise a PNPLA domain in the interval 947-1113; it reads LVLGGGGARG…INNLPADVAR (167 aa). Residues 951-956 carry the GXGXXG motif; it reads GGGARG. Positions 978–982 match the GXSXG motif; it reads GTSIG. The active-site Nucleophile is the S980. D1100 (proton acceptor) is an active-site residue. The DGA/G motif lies at 1100-1102; sequence DGG. The residue at position 1277 (S1277) is a Phosphoserine. A Phosphothreonine modification is found at T1281. The disordered stretch occupies residues 1297–1349; it reads DFQSTGIELDSDSECEPSMSQGPHSLTSPKQSQDSFPWLPNQDDQGPRLYRPS. Positions 1314–1331 are enriched in polar residues; that stretch reads SMSQGPHSLTSPKQSQDS.

Belongs to the NTE family. Expressed in the brain, liver, kidney, lung and testis.

Its subcellular location is the endoplasmic reticulum membrane. The protein resides in the lipid droplet. The enzyme catalyses a 1-acyl-sn-glycero-3-phosphocholine + H2O = sn-glycerol 3-phosphocholine + a fatty acid + H(+). The catalysed reaction is 1-(9Z-octadecenoyl)-sn-glycero-3-phosphocholine + H2O = sn-glycerol 3-phosphocholine + (9Z)-octadecenoate + H(+). It carries out the reaction 1-(9Z-octadecenoyl)-sn-glycero-3-phosphoethanolamine + H2O = sn-glycero-3-phosphoethanolamine + (9Z)-octadecenoate + H(+). It catalyses the reaction 1-(9Z-octadecenoyl)-sn-glycero-3-phospho-L-serine + H2O = sn-glycero-3-phospho-L-serine + (9Z)-octadecenoate + H(+). The enzyme catalyses 1-hexadecanoyl-sn-glycero-3-phosphocholine + H2O = sn-glycerol 3-phosphocholine + hexadecanoate + H(+). The catalysed reaction is 1-hexadecanoyl-sn-glycero-3-phosphate + H2O = sn-glycerol 3-phosphate + hexadecanoate + H(+). Its function is as follows. Lysophospholipase which preferentially deacylates unsaturated lysophosphatidylcholine (C18:1), generating glycerophosphocholine. Also can deacylate, to a lesser extent, lysophosphatidylethanolamine (C18:1), lysophosphatidyl-L-serine (C18:1) and lysophosphatidic acid (C16:0). The protein is Patatin-like phospholipase domain-containing protein 7 (Pnpla7) of Rattus norvegicus (Rat).